The primary structure comprises 315 residues: FAD-linked oxidoreductase sthB (315 aa).

The FAD-binding PCMH-type domain maps to 19–201 (QPCSLGNYVS…LSMTSRVHAD (183 aa)).

It belongs to the oxygen-dependent FAD-linked oxidoreductase family.

The enzyme catalyses betaenone C = betaenone A. It catalyses the reaction stemphyloxin I = stemphyloxin II. It functions in the pathway mycotoxin biosynthesis. In terms of biological role, FAD-linked oxidoreductase; part of the gene cluster that mediates the biosynthesis of the phytotoxin stemphyloxin II. The first step of the pathway is the synthesis of dehydroprobetaenone I by the polyketide synthase sthA and the enoyl reductase sthE via condensation of one acetyl-CoA starter unit with 7 malonyl-CoA units and 5 methylations. The C-terminal reductase (R) domain of sthA catalyzes the reductive release of the polyketide chain. Because sthA lacks a designated enoylreductase (ER) domain, the required activity is provided the enoyl reductase sthE. The short-chain dehydrogenase/reductase sthC then catalyzes reduction of dehydroprobetaenone I to probetaenone I. The cytochrome P450 monooxygenase sthF catalyzes successive epoxidation, oxidation (resulting from epoxide opening) and hydroxylation to install a tertiary alcohol in the decaline ring to yield betaenone C from dehydroprobetaenone I and betaenone B from probetaenone I. The FAD-linked oxidoreductase sthB is responsible for the conversion of betaenone C to betaenone A via an intramolecular aldol reaction between C-1 and C-17 to form the bridged tricyclic system in betaenone A. Finally, the cytochrome P450 monooxygenase sthD catalyzes the hydroxylation of C-15 to afford the final metabolite stemphyloxin II. This chain is FAD-linked oxidoreductase sthB, found in Phaeosphaeria nodorum (strain SN15 / ATCC MYA-4574 / FGSC 10173) (Glume blotch fungus).